We begin with the raw amino-acid sequence, 353 residues long: Photosystem II D2 protein (353 aa).

T2 carries the post-translational modification N-acetylthreonine. At T2 the chain carries Phosphothreonine. Residues 41-61 (CAYFALGGWFTGTTFVTSWYT) traverse the membrane as a helical segment. H118 is a chlorophyll a binding site. Residues 125 to 141 (GFMLRQFELARSVQLRP) traverse the membrane as a helical segment. Pheophytin a contacts are provided by Q130 and N143. The chain crosses the membrane as a helical span at residues 153-166 (VFVSVFLIYPLGQS). H198 contributes to the chlorophyll a binding site. Residues 208-228 (AALLCAIHGATVENLYFEDGD) traverse the membrane as a helical segment. A plastoquinone-binding residues include H215 and F262. H215 lines the Fe cation pocket. H269 lines the Fe cation pocket. A helical transmembrane segment spans residues 279–295 (GLWMSALGVVGLALNLR).

The protein belongs to the reaction center PufL/M/PsbA/D family. As to quaternary structure, PSII is composed of 1 copy each of membrane proteins PsbA, PsbB, PsbC, PsbD, PsbE, PsbF, PsbH, PsbI, PsbJ, PsbK, PsbL, PsbM, PsbT, PsbX, PsbY, PsbZ, Psb30/Ycf12, at least 3 peripheral proteins of the oxygen-evolving complex and a large number of cofactors. It forms dimeric complexes. The D1/D2 heterodimer binds P680, chlorophylls that are the primary electron donor of PSII, and subsequent electron acceptors. It shares a non-heme iron and each subunit binds pheophytin, quinone, additional chlorophylls, carotenoids and lipids. There is also a Cl(-1) ion associated with D1 and D2, which is required for oxygen evolution. The PSII complex binds additional chlorophylls, carotenoids and specific lipids. serves as cofactor.

The protein resides in the plastid. It localises to the chloroplast thylakoid membrane. It carries out the reaction 2 a plastoquinone + 4 hnu + 2 H2O = 2 a plastoquinol + O2. In terms of biological role, photosystem II (PSII) is a light-driven water:plastoquinone oxidoreductase that uses light energy to abstract electrons from H(2)O, generating O(2) and a proton gradient subsequently used for ATP formation. It consists of a core antenna complex that captures photons, and an electron transfer chain that converts photonic excitation into a charge separation. The D1/D2 (PsbA/PsbD) reaction center heterodimer binds P680, the primary electron donor of PSII as well as several subsequent electron acceptors. D2 is needed for assembly of a stable PSII complex. The chain is Photosystem II D2 protein from Panax ginseng (Korean ginseng).